Reading from the N-terminus, the 3961-residue chain is Hybrid PKS-NRPS synthetase phm1 (3961 aa).

Residues 4–436 (SEPIAIIGSA…GTNAHAIVEA (433 aa)) enclose the Ketosynthase family 3 (KS3) domain. Catalysis depends on for beta-ketoacyl synthase activity residues Cys178, His317, and His356. Residues 541 to 867 (VFTGQGAQWP…RSKNDILELS (327 aa)) are malonyl-CoA:ACP transacylase (MAT) domain. Residues 933-1068 (HPILGKRCLE…GTVTVTLAEP (136 aa)) form an N-terminal hotdog fold region. A dehydratase (DH) domain region spans residues 933 to 1234 (HPILGKRCLE…LELVPFTAAR (302 aa)). A PKS/mFAS DH domain is found at 933 to 1236 (HPILGKRCLE…LVPFTAARPE (304 aa)). The Proton acceptor; for dehydratase activity role is filled by His966. The interval 1083-1236 (MTEIEVDRFY…LVPFTAARPE (154 aa)) is C-terminal hotdog fold. Catalysis depends on Asp1143, which acts as the Proton donor; for dehydratase activity. The interval 1376-1569 (FDFYDQGLGL…GFGGIDTSTP (194 aa)) is methyltransferase (MT) domain. The interval 2106–2277 (TYLLIGMSGQ…GVPGSAISIS (172 aa)) is ketoreductase (KR) domain. One can recognise a Carrier 1 domain in the interval 2386–2464 (QAATIIKDGF…ELLQEAMDRT (79 aa)). Position 2424 is an O-(pantetheine 4'-phosphoryl)serine (Ser2424). A disordered region spans residues 2482–2527 (PVTNTATPPPEVQVTGSASDSSRSLTPDGLSTSRPSTPVRTPMTEI). A compositionally biased stretch (polar residues) spans 2495 to 2520 (VTGSASDSSRSLTPDGLSTSRPSTPV). Residues 2553–2993 (PMSYGQARFW…DLPRWAGADV (441 aa)) form a condensation (C) domain region. Residues 3019 to 3424 (QMIGTYASKP…DGALFVHGRI (406 aa)) are adenylation (A) (KR) domain. In terms of domain architecture, Carrier 2 spans 3542-3616 (ANMEGRVAAL…GMARHVRAAF (75 aa)). Residue Ser3576 is modified to O-(pantetheine 4'-phosphoryl)serine. The interval 3725–3871 (ITDIVFHCAA…VRPVSDVATT (147 aa)) is reductase (RED) domain.

The protein in the C-terminal section; belongs to the NRP synthetase family.

The protein operates within secondary metabolite biosynthesis. Its function is as follows. Hybrid PKS-NRPS synthetase; part of the gene cluster that mediates the biosynthesis of the trans-fused decalin-containing tetramic acid phomasetin, the stereochemical opposite of the HIV-1 integrase inhibitor equisetin. The PKS module of phm1 together with the enoylreductase phm4 catalyze the formation of the polyketide unit which is then conjugated to L-serine by the condensation domain of the phm1 NRPS module. Activity of the Dieckmann cyclase domain (RED) of phm1 results in release of the Dieckmann product intermediate. The Diels-Alderase phm7 then uses the Dieckmann product of phm1 as substrate and catalyzes the Diels-Alder cycloaddition to form the decalin ring of N-desmethylphomasetin. N-desmethylphomasetin is further methylated to phomasetin by the methyltransferase phm5. This Pyrenochaetopsis sp protein is Hybrid PKS-NRPS synthetase phm1.